Here is a 253-residue protein sequence, read N- to C-terminus: CD151 antigen (253 aa).

Over 1-18 the chain is Cytoplasmic; it reads MGEFNEKKATCGTVCLKY. Residues C11 and C15 are each lipidated (S-palmitoyl cysteine). A helical membrane pass occupies residues 19-39; sequence LLFTYNCCFWLAGLAVMAVGI. The Extracellular segment spans residues 40 to 57; the sequence is WTLALKSDYISLLASSTY. Residues 58 to 78 form a helical membrane-spanning segment; that stretch reads LATAYILVVAGVVVMVTGVLG. At 79-91 the chain is on the cytoplasmic side; it reads CCATFKERRNLLR. Residues 92–112 traverse the membrane as a helical segment; sequence LYFILLLIIFLLEIIAGILAY. Topologically, residues 113-221 are extracellular; it reads VYYQQLNTEL…LESFIQEHLR (109 aa). N159 carries an N-linked (GlcNAc...) asparagine glycan. The helical transmembrane segment at 222–242 threads the bilayer; sequence VIGAVGIGIACVQVFGMIFTC. Residues C242 and C243 are each lipidated (S-palmitoyl cysteine). The Cytoplasmic portion of the chain corresponds to 243-253; it reads CLYRSLKLEHY.

It belongs to the tetraspanin (TM4SF) family. As to quaternary structure, interacts with integrins ITGA3:ITGB1, ITGA5:ITGB1, ITGA3:ITGB1 and ITGA6:ITGB4 and with CD9 and CD181. Interacts (via the second extracellular domain) with integrin ITGAV:ITGB3. Interacts with ITGA3; this interaction modulates ITGA3 glycosylation pattern. Interacts with F11R. Interacts with RAC1 and CDC42; these interactions mediate physical association of RAC1 and CDC42 with integrin adhesion receptor complexes. In terms of processing, palmitoylated. Palmitoylation by ZDHHC2 regulates CD151 expression, association with other tetraspanin family proteins and function in cell adhesion. Ubiquitinated by RNF128 on lysine residues present in the tetraspanin amino terminus via 'Lys-48'-linked ubiquitin leading to proteasomal degradation.

It localises to the cell membrane. Functionally, structural component of specialized membrane microdomains known as tetraspanin-enriched microdomains (TERMs), which act as platforms for receptor clustering and signaling. Plays a role in various cellular and molecular mechanism through its association with both integrin and non-integrin proteins. These interactions facilitate critical cellular functions, including cell-to-cell communication, wound healing, platelet aggregation, trafficking, cell motility, and angiogenesis. Via interaction with JAM-A/F11R and integrin ITGA3:ITGB1, promotes the recruitment of signaling molecules such as RAC1, CDC42 and RhoGTPases to facilitate the polarization of epithelial cells and the reorganization of the actin cytoskeleton, which are critical steps in cell migration process. Regulates the glycosylation pattern of ITGA3:ITGB1 thereby modulating its activity. Plays an essential role in the maintenance of central laminin-binding integrin ITGA6:ITGB4-containing adhesion complexes. Essential for the proper assembly of the glomerular and tubular basement membranes in kidney. Contributes to T-cell activation by modulating integrin signaling leading to activation of downstream targets PTK2 and MAPK1/MAPK3. The protein is CD151 antigen (Cd151) of Rattus norvegicus (Rat).